Consider the following 496-residue polypeptide: Genome polyprotein (496 aa).

Residues 1-447 are Extracellular-facing; sequence SRCTHLENRD…HTVLGGAFNS (447 aa). Cystine bridges form between Cys3–Cys30, Cys60–Cys116, Cys60–Cys121, Cys74–Cys105, Cys92–Cys116, and Cys92–Cys121. The segment at 98-111 is fusion peptide; sequence DRGWGNHCGLFGKG. A glycan (N-linked (GlcNAc...) asparagine; by host) is linked at Asn154. Disulfide bonds link Cys186–Cys290 and Cys307–Cys338. A helical membrane pass occupies residues 448 to 468; the sequence is IFGGVGFLPKLLMGVALAWLG. The Cytoplasmic segment spans residues 469–479; that stretch reads LNTRNPTMSMS. The chain crosses the membrane as a helical span at residues 480–496; it reads FLLAGGLVLAMTLGVGA.

In terms of assembly, homodimer; in the endoplasmic reticulum and Golgi. Post-translationally, N-glycosylated.

The protein localises to the virion membrane. It localises to the host endoplasmic reticulum membrane. Binds to host cell surface receptor and mediates fusion between viral and cellular membranes. Envelope protein is synthesized in the endoplasmic reticulum in the form of heterodimer with protein prM. They play a role in virion budding in the ER, and the newly formed immature particle is covered with 60 spikes composed of heterodimer between precursor prM and envelope protein E. The virion is transported to the Golgi apparatus where the low pH causes dissociation of PrM-E heterodimers and formation of E homodimers. prM-E cleavage is ineficient, and many virions are only partially matured. These uncleaved prM would play a role in immune evasion. This chain is Genome polyprotein, found in Louping ill virus (strain Negishi 3248/49/P10) (Li).